The sequence spans 193 residues: dCTP deaminase (193 aa).

Residues 110–115 (RSSLAR), aspartate 128, 136–138 (VLE), tyrosine 171, lysine 178, and glutamine 182 contribute to the dCTP site. Glutamate 138 functions as the Proton donor/acceptor in the catalytic mechanism. Residues 169 to 193 (RPYNRREDAKYRNQQGAVASRIDKD) are disordered.

Belongs to the dCTP deaminase family. In terms of assembly, homotrimer.

It catalyses the reaction dCTP + H2O + H(+) = dUTP + NH4(+). The protein operates within pyrimidine metabolism; dUMP biosynthesis; dUMP from dCTP (dUTP route): step 1/2. Functionally, catalyzes the deamination of dCTP to dUTP. In Sodalis glossinidius (strain morsitans), this protein is dCTP deaminase.